We begin with the raw amino-acid sequence, 453 residues long: MGCSSSALNKAGDDNRLRSATEESESCFVQPKPRALGRESTLCGKVQKESLPPLDKLKISAVSTANGVQSLPEQPLAKEAADPPGATEETQPLQGLKGSEPPQPGGKDGAPGAEGKEEDVEAVTEAPPLKGSAETEPLGAEAENQPLITAGERDSTGAVEGTEDPQAAGEMTPLGTAERVPLEAAREPGSQEAGGKGEQSQLPETVPKETESPEILEGSQPVETAEPPQLQETVGENEQSQPLETVPKENASLEVSDGSQSVGAEGKKQLQETLGENEQSQLRETILGEHGGPEVSDGSQSVGAEEEKRLQEMLGKDEQPQLRETIPREHGGPEMSDASQSVETAVKADSLHKAPEGPGNMEKIQPERTVESMEHPAGILETGAKVEMARKIHTNEEDQHIEGETGETVETEMESEKVSEGAETKEEETGEAMDLSAATQIGMDGRVKGHSML.

Disordered stretches follow at residues 1-38 (MGCS…ALGR), 66-377 (NGVQ…EHPA), and 394-453 (TNEE…HSML). The span at 11–21 (AGDDNRLRSAT) shows a compositional bias: basic and acidic residues. Phosphoserine is present on S155. 2 stretches are compositionally biased toward polar residues: residues 230-243 (LQET…SQPL) and 271-283 (QETL…SQLR). Basic and acidic residues-rich tracts occupy residues 305 to 332 (EEEK…EHGG), 364 to 374 (IQPERTVESME), and 394 to 403 (TNEEDQHIEG). Residues 404–413 (ETGETVETEM) are compositionally biased toward acidic residues. Residues 414–424 (ESEKVSEGAET) show a composition bias toward basic and acidic residues.

This is Glutamate-rich protein 5 (ERICH5) from Bos taurus (Bovine).